Here is a 231-residue protein sequence, read N- to C-terminus: Ribonuclease HI (231 aa).

The region spanning 1-146 is the RNase H type-1 domain; it reads MRERAVAACD…ADRAASQAAV (146 aa). Residues D10, E50, D72, and D138 each contribute to the Mg(2+) site. Composition is skewed to low complexity over residues 148–157 and 166–181; these read QEAAGSALGS and VPAA…SGAA. Disordered stretches follow at residues 148–192 and 212–231; these read QEAA…SART and PIAK…VAAG.

This sequence belongs to the RNase H family. Monomer. Requires Mg(2+) as cofactor.

The protein localises to the cytoplasm. It catalyses the reaction Endonucleolytic cleavage to 5'-phosphomonoester.. Its function is as follows. Endonuclease that specifically degrades the RNA of RNA-DNA hybrids. This is Ribonuclease HI (rnhA) from Streptomyces coelicolor (strain ATCC BAA-471 / A3(2) / M145).